Reading from the N-terminus, the 248-residue chain is Triosephosphate isomerase (248 aa).

9-11 (NWK) contributes to the substrate binding site. Histidine 94 serves as the catalytic Electrophile. Glutamate 166 functions as the Proton acceptor in the catalytic mechanism. Residues glycine 172, serine 211, and 232 to 233 (GG) contribute to the substrate site.

It belongs to the triosephosphate isomerase family. As to quaternary structure, homodimer.

Its subcellular location is the cytoplasm. It catalyses the reaction D-glyceraldehyde 3-phosphate = dihydroxyacetone phosphate. It functions in the pathway carbohydrate biosynthesis; gluconeogenesis. Its pathway is carbohydrate degradation; glycolysis; D-glyceraldehyde 3-phosphate from glycerone phosphate: step 1/1. Functionally, involved in the gluconeogenesis. Catalyzes stereospecifically the conversion of dihydroxyacetone phosphate (DHAP) to D-glyceraldehyde-3-phosphate (G3P). The polypeptide is Triosephosphate isomerase (Vesicomyosocius okutanii subsp. Calyptogena okutanii (strain HA)).